Reading from the N-terminus, the 398-residue chain is Tryptophan synthase beta chain (398 aa).

At lysine 88 the chain carries N6-(pyridoxal phosphate)lysine.

This sequence belongs to the TrpB family. As to quaternary structure, tetramer of two alpha and two beta chains. The cofactor is pyridoxal 5'-phosphate.

The enzyme catalyses (1S,2R)-1-C-(indol-3-yl)glycerol 3-phosphate + L-serine = D-glyceraldehyde 3-phosphate + L-tryptophan + H2O. It functions in the pathway amino-acid biosynthesis; L-tryptophan biosynthesis; L-tryptophan from chorismate: step 5/5. Functionally, the beta subunit is responsible for the synthesis of L-tryptophan from indole and L-serine. The protein is Tryptophan synthase beta chain of Histophilus somni (strain 2336) (Haemophilus somnus).